A 353-amino-acid chain; its full sequence is MPVKVRIALDAMGGDFGPSVIVPGAAISLGRHPDAEFLLFGDSALIEKELAAHPALKKVSRVIHTDVAVSMHDKPSQALRRGRKVSSMWLAIEAVKKGEADVAVSAGNTGALMAMARFCLRTLPGIDRPAIAATWPTVRGDSVVLDLGATIGGDAAHLKALAVMGAAMASVLFDLERPTVGLLNIGVEEIKGGEEIREAAELLRAMQSPRFEFVGFVEGDGIGKGAADVIVSEGFSGNIALKAAEGTARQISEYLKAAMSRTWRSKIGYLFARDAFKALKDKMDPNKSNGGVFLGLNGIVVKSHGGTSADGFAYAVDVGYDMVRYDLLTKINQTLNREAGALVSTPTAQEAVS.

Belongs to the PlsX family. In terms of assembly, homodimer. Probably interacts with PlsY.

It is found in the cytoplasm. It catalyses the reaction a fatty acyl-[ACP] + phosphate = an acyl phosphate + holo-[ACP]. Its pathway is lipid metabolism; phospholipid metabolism. In terms of biological role, catalyzes the reversible formation of acyl-phosphate (acyl-PO(4)) from acyl-[acyl-carrier-protein] (acyl-ACP). This enzyme utilizes acyl-ACP as fatty acyl donor, but not acyl-CoA. The polypeptide is Phosphate acyltransferase (Rhodopseudomonas palustris (strain HaA2)).